Here is a 338-residue protein sequence, read N- to C-terminus: Sulfotransferase 2B1 (338 aa).

Lys67–Trp72 serves as a coordination point for 3'-phosphoadenylyl sulfate. Substrate contacts are provided by Trp95 and Trp100. Catalysis depends on His122, which acts as the Proton acceptor. Residues Arg144, Ser152, Tyr207, Ser241–Met246, and Arg271–Gly273 contribute to the 3'-phosphoadenylyl sulfate site. Positions Val301–Gln338 are disordered. The span at Pro327–Gln338 shows a compositional bias: low complexity.

This sequence belongs to the sulfotransferase 1 family. In terms of tissue distribution, expressed at high levels in epididymis, intestine and uterus, and low levels in brain and hypothalamus. Isoform 2 is most prominent in the brain and spinal cord, with modest expression in the lung, skin and spleen. Isoform 1 is most prominently expressed in skin and small intestine, with modest expression in muscle and prostate.

The protein localises to the cytoplasm. The protein resides in the cytosol. It localises to the microsome. Its subcellular location is the nucleus. It carries out the reaction an alcohol + 3'-phosphoadenylyl sulfate = an alkyl sulfate + adenosine 3',5'-bisphosphate + H(+). The enzyme catalyses pregnenolone + 3'-phosphoadenylyl sulfate = pregnenolone sulfate + adenosine 3',5'-bisphosphate + H(+). It catalyses the reaction 3beta-hydroxyandrost-5-en-17-one + 3'-phosphoadenylyl sulfate = dehydroepiandrosterone 3-sulfate + adenosine 3',5'-bisphosphate + H(+). The catalysed reaction is cholesterol + 3'-phosphoadenylyl sulfate = cholesterol sulfate + adenosine 3',5'-bisphosphate + H(+). Sulfotransferase that utilizes 3'-phospho-5'-adenylyl sulfate (PAPS) as sulfonate donor to catalyze the sulfate conjugation. Preferentially sulfonates cholesterol. Catalyzes sulfation of the 3beta-hydroxyl groups of steroids, such as, pregnenolone and dehydroepiandrosterone (DHEA). Cholesterol sulfation is approximately 10-fold higher than for pregnenolone and 20-fold higher than for DHEA. Plays a role in epidermal cholesterol metabolism and in the regulation of epidermal proliferation and differentiation. Its function is as follows. Strongly sulfonates pregnenolone, however is capable to sulfonate cholesterol with a high degree of efficiency. DHEA is a relatively poor substrate. This chain is Sulfotransferase 2B1 (Sult2b1), found in Mus musculus (Mouse).